A 24-amino-acid polypeptide reads, in one-letter code: Glutathione S-transferase (24 aa).

Belongs to the GST superfamily. In terms of assembly, monomer and homodimer.

The protein resides in the cytoplasm. It carries out the reaction RX + glutathione = an S-substituted glutathione + a halide anion + H(+). Conjugation of reduced glutathione to a wide number of exogenous and endogenous hydrophobic electrophiles. The sequence is that of Glutathione S-transferase from Pseudomonas sp. (strain CF600).